The chain runs to 343 residues: Flavone 3'-O-methyltransferase OMT1 (343 aa).

Asn-107 is a (E)-ferulate binding site. Residues Gly-184, Asp-207, Asp-227, Met-228, Met-240, and Lys-241 each coordinate S-adenosyl-L-homocysteine. Residue His-245 is the Proton acceptor of the active site. Asp-246 provides a ligand contact to (E)-5-hydroxyferulate. Catalysis depends on residues Glu-273 and Glu-305.

It belongs to the class I-like SAM-binding methyltransferase superfamily. Cation-independent O-methyltransferase family. COMT subfamily. Homodimer.

The enzyme catalyses (E)-5-hydroxyferulate + S-adenosyl-L-methionine = (E)-sinapate + S-adenosyl-L-homocysteine + H(+). It catalyses the reaction luteolin + S-adenosyl-L-methionine = chrysoeriol + S-adenosyl-L-homocysteine + H(+). The catalysed reaction is quercetin + S-adenosyl-L-methionine = isorhamnetin + S-adenosyl-L-homocysteine + H(+). It carries out the reaction (E)-caffeate + S-adenosyl-L-methionine = (E)-ferulate + S-adenosyl-L-homocysteine + H(+). The enzyme catalyses a 3'-hydroxyflavone + S-adenosyl-L-methionine = a 3'-methoxyflavone + S-adenosyl-L-homocysteine + H(+). The protein operates within flavonoid metabolism. Catalyzes the 3'-O-methylation of the flavonoids luteolin and quercetin. Catalyzes the 3- of 5-O-methylation of the phenylpropanoids caffeate and 5-hydroxyferulate. Substrate preference is 5-hydroxyferulate &gt; luteolin &gt; quercetin &gt; caffeate. Apigenin, kempferol and 3,4-dimethylquercetin do not seem to be substrates for methylation. The chain is Flavone 3'-O-methyltransferase OMT1 from Chrysosplenium americanum (American golden saxifrage).